Consider the following 155-residue polypeptide: UPF0260 protein R01011 (155 aa).

It belongs to the UPF0260 family.

In Rhizobium meliloti (strain 1021) (Ensifer meliloti), this protein is UPF0260 protein R01011.